The sequence spans 540 residues: Protein PALS2 (540 aa).

L27 domains are found at residues 1–48 (MQQV…EDSK) and 49–107 (LEAV…YDSP). Positions 130 to 209 (ILGIHKRAGE…SVTLKILPSY (80 aa)) constitute a PDZ domain. One can recognise an SH3 domain in the interval 215–284 (PQQVFVKCHF…PSQFLEEKRK (70 aa)). Residues 338-525 (RKTLVLIGAQ…AFEKLQTAIE (188 aa)) enclose the Guanylate kinase-like domain. Tyrosine 500 is subject to Phosphotyrosine.

It belongs to the MAGUK family. In terms of assembly, interacts with CADM1. Interacts with the LIN7 proteins. As to expression, abundant in testis, brain, and kidney with lower levels detectable in other tissues.

It localises to the membrane. The chain is Protein PALS2 from Homo sapiens (Human).